A 1060-amino-acid polypeptide reads, in one-letter code: Carbamoyl phosphate synthase large chain (1060 aa).

Positions 1 to 400 (MPRDESINKV…SLNKAIRSLD (400 aa)) are carboxyphosphate synthetic domain. R127, R167, G173, G174, Q206, V208, E213, G240, I241, H242, Q283, and E297 together coordinate ATP. The 196-residue stretch at 131–326 (DSFMKKLNEP…IAKIAAKIAV (196 aa)) folds into the ATP-grasp 1 domain. 3 residues coordinate Mg(2+): Q283, E297, and N299. Q283, E297, and N299 together coordinate Mn(2+). Residues 401-539 (IGADGFTETP…YGCYDLEDEV (139 aa)) are oligomerization domain. The carbamoyl phosphate synthetic domain stretch occupies residues 540–926 (EVSDRRKVLI…YKSQLSASMD (387 aa)). Positions 664-858 (TEVLNKLGIP…LAKMAARLMM (195 aa)) constitute an ATP-grasp 2 domain. The ATP site is built by R700, K739, L741, E746, G771, V772, H773, S774, Q814, and E829. Mg(2+)-binding residues include Q814, E829, and N831. 3 residues coordinate Mn(2+): Q814, E829, and N831. Residues 925 to 1060 (MDLLNEGKVF…VKSLDEYHGM (136 aa)) enclose the MGS-like domain. The interval 927–1060 (LLNEGKVFIS…VKSLDEYHGM (134 aa)) is allosteric domain.

It belongs to the CarB family. In terms of assembly, composed of two chains; the small (or glutamine) chain promotes the hydrolysis of glutamine to ammonia, which is used by the large (or ammonia) chain to synthesize carbamoyl phosphate. Tetramer of heterodimers (alpha,beta)4. Mg(2+) is required as a cofactor. Mn(2+) serves as cofactor.

The catalysed reaction is hydrogencarbonate + L-glutamine + 2 ATP + H2O = carbamoyl phosphate + L-glutamate + 2 ADP + phosphate + 2 H(+). The enzyme catalyses hydrogencarbonate + NH4(+) + 2 ATP = carbamoyl phosphate + 2 ADP + phosphate + 2 H(+). It participates in amino-acid biosynthesis; L-arginine biosynthesis; carbamoyl phosphate from bicarbonate: step 1/1. It functions in the pathway pyrimidine metabolism; UMP biosynthesis via de novo pathway; (S)-dihydroorotate from bicarbonate: step 1/3. Its function is as follows. Large subunit of the glutamine-dependent carbamoyl phosphate synthetase (CPSase). CPSase catalyzes the formation of carbamoyl phosphate from the ammonia moiety of glutamine, carbonate, and phosphate donated by ATP, constituting the first step of 2 biosynthetic pathways, one leading to arginine and/or urea and the other to pyrimidine nucleotides. The large subunit (synthetase) binds the substrates ammonia (free or transferred from glutamine from the small subunit), hydrogencarbonate and ATP and carries out an ATP-coupled ligase reaction, activating hydrogencarbonate by forming carboxy phosphate which reacts with ammonia to form carbamoyl phosphate. The polypeptide is Carbamoyl phosphate synthase large chain (Methanothermobacter thermautotrophicus (strain ATCC 29096 / DSM 1053 / JCM 10044 / NBRC 100330 / Delta H) (Methanobacterium thermoautotrophicum)).